The primary structure comprises 699 residues: LMBR1 domain-containing protein 2 homolog (699 aa).

The Extracellular segment spans residues 1–3 (MAY). Residues 4–26 (LLTFGIIAALCLASISLYRYGNI) traverse the membrane as a helical segment. Over 27 to 30 (PRQH) the chain is Cytoplasmic. The chain crosses the membrane as a helical span at residues 31–51 (ILVTLSVLTAWCFSFLIVFTI). Over 52–106 (PLDVTSTLYRQCLAEHKLALDAAGNASTTANITPPPECQEPWGMVPESVFPNLWR) the chain is Extracellular. N76 carries N-linked (GlcNAc...) asparagine glycosylation. The chain crosses the membrane as a helical span at residues 107-127 (IIYWSSQFLTWLIMPLMQSYL). Residues 128 to 144 (KAGDFTIKGKLKSALIE) are Cytoplasmic-facing. A helical transmembrane segment spans residues 145–165 (NAIYYGSYLFICGVLLIYIAV). The Extracellular portion of the chain corresponds to 166–181 (KGVPLDWQKLKAIASS). The chain crosses the membrane as a helical span at residues 182–202 (ASNTWGLFLLILLLGYALVEV). Over 203–381 (PRSLWNNAKP…ECLLKAPFLK (179 aa)) the chain is Cytoplasmic. The helical transmembrane segment at 382–402 (TLCVVTATMSAMVVWSEVTFF) threads the bilayer. Residues 403 to 426 (SRDPVLSIFANVIYLAKESYDFFT) are Extracellular-facing. The chain crosses the membrane as a helical span at residues 427 to 447 (IEVFSMMVLCYFFYCTYSTIL). Over 448-467 (RIRFLNLYYLAPHHQTNEHS) the chain is Cytoplasmic. A helical membrane pass occupies residues 468–488 (LIFSGMLLCRLTPPMCLNFLG). The Extracellular portion of the chain corresponds to 489–514 (LIHMDSHIIPERMMETYYTRIMGHMD). The helical transmembrane segment at 515–535 (VIGIISNGFNIYFPMCMLAFC) threads the bilayer. Residues 536-699 (LSTWFSLGSR…PPPRGLFDDV (164 aa)) lie on the Cytoplasmic side of the membrane. Residues 564–592 (ELVQEGKDLIAREKRRRQRAEEAMARRRD) are a coiled coil. Positions 669–699 (FRGTSELDPDYEAENERRIVGPPPRGLFDDV) are disordered.

The protein belongs to the LIMR family.

Its subcellular location is the membrane. This Drosophila pseudoobscura pseudoobscura (Fruit fly) protein is LMBR1 domain-containing protein 2 homolog.